The following is a 249-amino-acid chain: CDP-diacylglycerol pyrophosphatase (249 aa).

A helical membrane pass occupies residues 7-27; that stretch reads FLLAVVIVAAVAGIGYWKLAA.

The protein belongs to the Cdh family.

It localises to the cell inner membrane. The catalysed reaction is a CDP-1,2-diacyl-sn-glycerol + H2O = a 1,2-diacyl-sn-glycero-3-phosphate + CMP + 2 H(+). Its pathway is phospholipid metabolism; CDP-diacylglycerol degradation; phosphatidate from CDP-diacylglycerol: step 1/1. This is CDP-diacylglycerol pyrophosphatase from Citrobacter koseri (strain ATCC BAA-895 / CDC 4225-83 / SGSC4696).